Consider the following 176-residue polypeptide: MERSQKEVLIGSVRQKFERMSSAVFLDFKGMNVEAVTKLRDEFRKSGVEYRVVKNTLVRHAIKEHPWAKTLSKSLTGMTGVAWSYEDPSAAAKVVKAFRKDNQKLQIKAGLIEGQILSGDAVETQLATMPGKDELRATLLATLQAPLQQFVQQLNAPLQNFAYLLKAKEEEAGKQA.

This sequence belongs to the universal ribosomal protein uL10 family. Part of the ribosomal stalk of the 50S ribosomal subunit. The N-terminus interacts with L11 and the large rRNA to form the base of the stalk. The C-terminus forms an elongated spine to which L12 dimers bind in a sequential fashion forming a multimeric L10(L12)X complex.

Functionally, forms part of the ribosomal stalk, playing a central role in the interaction of the ribosome with GTP-bound translation factors. In Sorangium cellulosum (strain So ce56) (Polyangium cellulosum (strain So ce56)), this protein is Large ribosomal subunit protein uL10.